The sequence spans 216 residues: Elongation factor Ts (216 aa).

The involved in Mg(2+) ion dislocation from EF-Tu stretch occupies residues Thr81 to Val84.

The protein belongs to the EF-Ts family.

It localises to the cytoplasm. In terms of biological role, associates with the EF-Tu.GDP complex and induces the exchange of GDP to GTP. It remains bound to the aminoacyl-tRNA.EF-Tu.GTP complex up to the GTP hydrolysis stage on the ribosome. In Geobacter sulfurreducens (strain ATCC 51573 / DSM 12127 / PCA), this protein is Elongation factor Ts.